Reading from the N-terminus, the 433-residue chain is Tol-Pal system protein TolB (433 aa).

An N-terminal signal peptide occupies residues 1 to 21 (MRNLLRGMLVVICCMAGIAAA).

The protein belongs to the TolB family. In terms of assembly, the Tol-Pal system is composed of five core proteins: the inner membrane proteins TolA, TolQ and TolR, the periplasmic protein TolB and the outer membrane protein Pal. They form a network linking the inner and outer membranes and the peptidoglycan layer.

Its subcellular location is the periplasm. In terms of biological role, part of the Tol-Pal system, which plays a role in outer membrane invagination during cell division and is important for maintaining outer membrane integrity. In Pseudomonas fluorescens (strain ATCC BAA-477 / NRRL B-23932 / Pf-5), this protein is Tol-Pal system protein TolB.